A 218-amino-acid chain; its full sequence is Oxidoreductase claN (218 aa).

NADP(+) is bound by residues K38, D57, and N82. Catalysis depends on S134, which acts as the Proton donor. Positions 148, 152, and 183 each coordinate NADP(+). The Proton acceptor role is filled by Y148. The active-site Lowers pKa of active site Tyr is the K152.

It belongs to the short-chain dehydrogenases/reductases (SDR) family.

The protein operates within pigment biosynthesis. Oxidoreductase; part of the gene cluster that mediates the biosynthesis of the bianthraquinone cladofulvin, a conidial pigment not required for virulence but that plays a role in fitness and resistance to environmental stresses including UV light and low-temperature stress. The pathway begins with the synthesis of atrochrysone thioester by the polyketide synthase (PKS) claG. The atrochrysone carboxyl ACP thioesterase claF then breaks the thioester bond and releases the atrochrysone carboxylic acid from claG. This compound is decarboxylated by claH to yield emodin, which is further converted to chrysophanol hydroquinone by the reductase claC and the dehydratase claB. The cytochrome P450 monooxygenase claM then catalyzes the dimerization of nataloe-emodin to cladofulvin. The chain is Oxidoreductase claN from Passalora fulva (Tomato leaf mold).